The primary structure comprises 569 residues: Small ribosomal subunit protein bS1 (569 aa).

S1 motif domains are found at residues 52-116 (GAIL…LSRE), 134-199 (GSIV…VSRR), 220-288 (GERR…LGLK), 305-375 (GKRV…LGLK), 392-462 (GLRV…LGVK), and 479-548 (GSDI…LSIK).

Belongs to the bacterial ribosomal protein bS1 family.

Its function is as follows. Binds mRNA; thus facilitating recognition of the initiation point. It is needed to translate mRNA with a short Shine-Dalgarno (SD) purine-rich sequence. This chain is Small ribosomal subunit protein bS1 (rpsA), found in Chlamydia trachomatis serovar D (strain ATCC VR-885 / DSM 19411 / UW-3/Cx).